The primary structure comprises 262 residues: Shikimate dehydrogenase (NADP(+)) (262 aa).

Shikimate-binding positions include 15 to 17 and Thr62; that span reads SRS. Lys66 acts as the Proton acceptor in catalysis. Residue Glu78 coordinates NADP(+). Residues Asn87 and Asp102 each contribute to the shikimate site. NADP(+)-binding positions include 126-130, 150-155, and Met214; these read GAGGA and NRTLAR. A shikimate-binding site is contributed by Tyr216. NADP(+) is bound at residue Gly236.

The protein belongs to the shikimate dehydrogenase family. Homodimer.

It carries out the reaction shikimate + NADP(+) = 3-dehydroshikimate + NADPH + H(+). Its pathway is metabolic intermediate biosynthesis; chorismate biosynthesis; chorismate from D-erythrose 4-phosphate and phosphoenolpyruvate: step 4/7. Functionally, involved in the biosynthesis of the chorismate, which leads to the biosynthesis of aromatic amino acids. Catalyzes the reversible NADPH linked reduction of 3-dehydroshikimate (DHSA) to yield shikimate (SA). The polypeptide is Shikimate dehydrogenase (NADP(+)) (Acinetobacter baumannii (strain SDF)).